Here is a 496-residue protein sequence, read N- to C-terminus: Palmitoleoyl-protein carboxylesterase NOTUM (496 aa).

The first 19 residues, Met-1–Gly-19, serve as a signal peptide directing secretion. Residues Glu-21–Gly-46 are disordered. Ser-81 bears the Phosphoserine; by FAM20C mark. Asn-96 is a glycosylation site (N-linked (GlcNAc...) asparagine). Active-site charge relay system residues include Ser-232, Asp-340, and His-389.

Belongs to the pectinacetylesterase family. Notum subfamily. Rarely expressed in adult normal tissues.

It localises to the secreted. The enzyme catalyses [Wnt protein]-O-(9Z)-hexadecenoyl-L-serine + H2O = [Wnt protein]-L-serine + (9Z)-hexadecenoate + H(+). Its function is as follows. Carboxylesterase that acts as a key negative regulator of the Wnt signaling pathway by specifically mediating depalmitoleoylation of WNT proteins. Serine palmitoleoylation of WNT proteins is required for efficient binding to frizzled receptors. The polypeptide is Palmitoleoyl-protein carboxylesterase NOTUM (Homo sapiens (Human)).